The primary structure comprises 357 residues: MLKLVIIENMAEIMLFSLDLLLFSTDILCFNFPSKMIKLPGFITIQIFFYPQASFGISANTILLLFHIFTFVFSHRSKSIDMIISHLSLIHILLLFTQAILVSLDFFGSQNTQDDLRYKVIVFLNKVMRGLSICTPCLLSVLQAIISPSIFSLAKLKHPSASHILGFFLFSWVLNMFIGVIFCCTLRLPPVKRGQSSVCHTALFLFAHELHPQETVFHTNDFEGCHLYRVHGPLKRLHGDYFIQTIRGYLSAFTQPACPRVSPVKRASQAILLLVSFVFTYWVDFTFSFSGGVTWINDSLLVWLQVIVANSYAAISPLMLIYADNQIFKTLQMLWFKYLSPPKLMLKFNRQCGSTKK.

Residues M1–K3 lie on the Extracellular side of the membrane. A helical transmembrane segment spans residues L4 to S24. The Cytoplasmic portion of the chain corresponds to T25–Q52. Residues A53–F73 form a helical membrane-spanning segment. Residues S74–D81 lie on the Extracellular side of the membrane. A helical transmembrane segment spans residues M82–V102. At S103–G130 the chain is on the cytoplasmic side. Residues L131–F151 traverse the membrane as a helical segment. Residues S152 to H163 lie on the Extracellular side of the membrane. Residues I164 to C184 form a helical membrane-spanning segment. Over T185 to Q269 the chain is Cytoplasmic. A helical membrane pass occupies residues A270 to S290. Over G291 to L300 the chain is Extracellular. N-linked (GlcNAc...) asparagine glycosylation occurs at N297. The helical transmembrane segment at L301–I321 threads the bilayer. Topologically, residues Y322–K357 are cytoplasmic.

This sequence belongs to the G-protein coupled receptor 1 family.

Its subcellular location is the cell membrane. Putative pheromone receptor. This Homo sapiens (Human) protein is Vomeronasal type-1 receptor 5 (VN1R5).